The chain runs to 122 residues: Small ribosomal subunit protein bS6 (122 aa).

A disordered region spans residues 97–122; sequence TAPSPMMKAVQKEDAAKSHRAEAPAA. A compositionally biased stretch (basic and acidic residues) spans 106-122; sequence VQKEDAAKSHRAEAPAA.

This sequence belongs to the bacterial ribosomal protein bS6 family.

Binds together with bS18 to 16S ribosomal RNA. In Janthinobacterium sp. (strain Marseille) (Minibacterium massiliensis), this protein is Small ribosomal subunit protein bS6.